Here is a 528-residue protein sequence, read N- to C-terminus: Glutamyl-tRNA(Gln) amidotransferase subunit A, mitochondrial (528 aa).

The active-site Charge relay system is K76. The disordered stretch occupies residues 148 to 167 (YREKRKQNPHSENEDSDWLI). The active-site Charge relay system is the S171. Catalysis depends on S195, which acts as the Acyl-ester intermediate.

Belongs to the amidase family. GatA subfamily. Subunit of the heterotrimeric GatCAB amidotransferase (AdT) complex, composed of A (QRSL1), B (GATB) and C (GATC) subunits.

The protein localises to the mitochondrion. The enzyme catalyses L-glutamyl-tRNA(Gln) + L-glutamine + ATP + H2O = L-glutaminyl-tRNA(Gln) + L-glutamate + ADP + phosphate + H(+). Its function is as follows. Allows the formation of correctly charged Gln-tRNA(Gln) through the transamidation of misacylated Glu-tRNA(Gln) in the mitochondria. The reaction takes place in the presence of glutamine and ATP through an activated gamma-phospho-Glu-tRNA(Gln). The chain is Glutamyl-tRNA(Gln) amidotransferase subunit A, mitochondrial from Homo sapiens (Human).